The primary structure comprises 185 residues: Ribosome-recycling factor (185 aa).

This sequence belongs to the RRF family.

It localises to the cytoplasm. Its function is as follows. Responsible for the release of ribosomes from messenger RNA at the termination of protein biosynthesis. May increase the efficiency of translation by recycling ribosomes from one round of translation to another. The polypeptide is Ribosome-recycling factor (Shewanella woodyi (strain ATCC 51908 / MS32)).